Reading from the N-terminus, the 397-residue chain is Lysophospholipid transporter LplT (397 aa).

The Periplasmic segment spans residues 1–17; the sequence is MSESVHTNTSLWSKGMK. Residues 18–38 form a helical membrane-spanning segment; it reads AVIVAQFLSAFGDNALLFATL. The Cytoplasmic segment spans residues 39-52; sequence ALLNAQFYPEWSQP. Residues 53-73 traverse the membrane as a helical segment; sequence ILQMVFVGAYILFAPFVGQVA. Residues 74 to 90 are Periplasmic-facing; it reads DSFAKGRVMMFANGLKL. A helical membrane pass occupies residues 91–111; the sequence is LGAASICFGINPFLGYTLVGV. Over 112–144 the chain is Cytoplasmic; it reads GAAAYSPAKYGILGELTTGSKLVKANGLMEAST. Residues 145–165 form a helical membrane-spanning segment; it reads IAAILLGSVAGGVLADWHVLV. Position 166 (Ala166) is a topological domain, periplasmic. Residues 167-187 traverse the membrane as a helical segment; the sequence is LAACALAYGGAVVANIYIPKL. Over 188 to 226 the chain is Cytoplasmic; the sequence is AAARPGQSWNLINMTRSFLNACTSLWRNGETRFSLVGTS. A helical transmembrane segment spans residues 227 to 247; sequence LFWGAGVTLRFLLVLWVPVAL. At 248-256 the chain is on the periplasmic side; that stretch reads GITDNATPT. The chain crosses the membrane as a helical span at residues 257 to 277; it reads YLNAMVAIGIVVGAGAAAKLV. Topologically, residues 278–280 are cytoplasmic; it reads TLE. Residues 281–301 traverse the membrane as a helical segment; it reads TVSRCMPAGILIGVVVLIFSL. At 302-304 the chain is on the periplasmic side; the sequence is QHE. A helical membrane pass occupies residues 305–325; sequence LLPAYALLMLIGVMGGFFVVP. Topologically, residues 326–343 are cytoplasmic; sequence LNALLQERGKKSVGAGNA. Residues 344 to 364 traverse the membrane as a helical segment; it reads IAVQNLGENSAMLLMLGIYSL. Residues 365–366 lie on the Periplasmic side of the membrane; sequence AV. Residues 367-387 traverse the membrane as a helical segment; sequence MIGIPVVPIGIGFGALFALAI. At 388–397 the chain is on the cytoplasmic side; the sequence is TALWIWQRRH.

Belongs to the major facilitator superfamily. LplT (TC 2.A.1.42) family.

It is found in the cell inner membrane. Its function is as follows. Catalyzes the facilitated diffusion of 2-acyl-glycero-3-phosphoethanolamine (2-acyl-GPE) into the cell. This chain is Lysophospholipid transporter LplT, found in Escherichia coli (strain SE11).